The primary structure comprises 185 residues: Ribosome-recycling factor (185 aa).

Belongs to the RRF family.

The protein localises to the cytoplasm. In terms of biological role, responsible for the release of ribosomes from messenger RNA at the termination of protein biosynthesis. May increase the efficiency of translation by recycling ribosomes from one round of translation to another. The protein is Ribosome-recycling factor of Yersinia pseudotuberculosis serotype O:1b (strain IP 31758).